The chain runs to 1351 residues: Alpha-latrotoxin-Lh1a (1351 aa).

The N-terminal stretch at 1-7 (SLVRMRR) is a signal peptide. The segment at 4–7 (RMRR) is furin-like endopeptidase recognition region. Positions 226-245 (VLYALLYGTQTYVSVMFFLL) are helix H8 is the probable transmembrane region of the tetrameric pore inserted in the target cell membrane. A disulfide bridge connects residues C401 and C1054. ANK repeat units lie at residues 446–477 (LYNT…ATFE), 478–509 (QGRT…ELNQ), 513–542 (KGYT…SINS), 547–577 (FLQT…NINE), 581–610 (DGFT…DLNA), 614–644 (KGLT…DVNA), 648–678 (NNMT…NADV), 683–711 (GLLS…NVNV), 717–746 (GGIT…NIEQ), 750–779 (EKYT…NFEA), 783–812 (SGAT…NWRD), 816–846 (NGQM…VLDI), 850–879 (NSDT…DINT), 883–912 (TGHA…NVYI), 916–945 (DGIN…KFEW), 959–991 (EECA…GNFA), 992–1019 (ICGP…DLNV), 1023–1052 (KPDT…KVNH), 1056–1085 (NGMT…DFRR), 1089–1119 (LGAT…DIDI), 1125–1154 (DKET…DMTI), and 1158–1187 (YDKT…KFRR). A furin-like endopeptidase recognition region region spans residues 1184 to 1187 (KFRR). The propeptide occupies 1188-1351 (EYKSSYGEHS…LGSVIMNSHS (164 aa)).

The protein belongs to the cationic peptide 01 (latrotoxin) family. 03 (alpha-latrotoxin) subfamily. Homotetramer in membranes. Post-translationally, processed by furin-like proteases at both the N- and C-termini. In terms of tissue distribution, expressed in venom gland, cephalothorax, and abdomen tissues from both males and females.

The protein resides in the secreted. Its subcellular location is the target cell membrane. Functionally, presynaptic neurotoxin that causes massive release of neurotransmitters from vertebrate (but not invertebrate) nerve terminals and endocrine cells via a complex mechanism involving activation of receptor(s) and toxin insertion into the plasma membrane with subsequent pore formation. Binds to neurexin-1-alpha (NRXN1) in a calcium dependent manner, adhesion G protein-coupled receptor L1 (ADGRL1, also termed latrophilin-1 and calcium-independent receptor of latrotoxin (CIRL)), and receptor-type tyrosine-protein phosphatase S (PTPRS), also termed PTP sigma. NRXN1 and PTPRS are suggested to provide a platform for binding and subsequent pore formation events. In contrast, binding to ADGRL1 does not involve oligomerization and channel formation, but direct downstream stimulation of the synaptic fusion machinery. Induces rapid muscle contracture and loss of twitch tension when added to the isolated and indirectly stimulated chick biventer cervicis nerve-muscle preparation. In Latrodectus hasselti (Redback spider), this protein is Alpha-latrotoxin-Lh1a.